A 249-amino-acid polypeptide reads, in one-letter code: Segregation and condensation protein A (249 aa).

It belongs to the ScpA family. As to quaternary structure, component of a cohesin-like complex composed of ScpA, ScpB and the Smc homodimer, in which ScpA and ScpB bind to the head domain of Smc. The presence of the three proteins is required for the association of the complex with DNA.

It is found in the cytoplasm. In terms of biological role, participates in chromosomal partition during cell division. May act via the formation of a condensin-like complex containing Smc and ScpB that pull DNA away from mid-cell into both cell halves. The chain is Segregation and condensation protein A from Listeria innocua serovar 6a (strain ATCC BAA-680 / CLIP 11262).